A 669-amino-acid polypeptide reads, in one-letter code: Elongation factor G 2 (669 aa).

Residues methionine 1–phenylalanine 276 enclose the tr-type G domain. GTP-binding positions include alanine 10–threonine 17, aspartate 74–histidine 78, and asparagine 128–aspartate 131.

This sequence belongs to the TRAFAC class translation factor GTPase superfamily. Classic translation factor GTPase family. EF-G/EF-2 subfamily.

Its subcellular location is the cytoplasm. Its function is as follows. Catalyzes the GTP-dependent ribosomal translocation step during translation elongation. During this step, the ribosome changes from the pre-translocational (PRE) to the post-translocational (POST) state as the newly formed A-site-bound peptidyl-tRNA and P-site-bound deacylated tRNA move to the P and E sites, respectively. Catalyzes the coordinated movement of the two tRNA molecules, the mRNA and conformational changes in the ribosome. The protein is Elongation factor G 2 (fusB) of Borreliella burgdorferi (strain ATCC 35210 / DSM 4680 / CIP 102532 / B31) (Borrelia burgdorferi).